The chain runs to 383 residues: Guanine nucleotide-binding protein G(s) subunit alpha (383 aa).

Residues 1–31 form a disordered region; it reads MGCFGSAGSKQSDSNSSEDTKSQKRRSDAIT. A lipid anchor (N-palmitoyl glycine) is attached at glycine 2. Cysteine 3 is lipidated: S-palmitoyl cysteine. The segment covering 8-17 has biased composition (polar residues); sequence GSKQSDSNSS. The segment covering 18–31 has biased composition (basic and acidic residues); sequence EDTKSQKRRSDAIT. In terms of domain architecture, G-alpha spans 43 to 383; sequence ATHRLLLLGA…RMHLRQYELL (341 aa). Residues 46 to 59 are G1 motif; that stretch reads RLLLLGAGESGKST. Residues 51 to 58, 187 to 193, 212 to 216, 281 to 284, and alanine 355 each bind GTP; these read GAGESGKS, LRCRVLT, DVGGQ, and NKQD. Residues serine 58 and threonine 193 each contribute to the Mg(2+) site. Residues 185 to 193 are G2 motif; sequence DILRCRVLT. The interval 208–217 is G3 motif; it reads FHMFDVGGQR. The G4 motif stretch occupies residues 277–284; the sequence is ILFLNKQD. A G5 motif region spans residues 353–358; it reads TCAVDT.

This sequence belongs to the G-alpha family. G(s) subfamily. As to quaternary structure, g proteins are composed of 3 units; alpha, beta and gamma. The alpha chain contains the guanine nucleotide binding site.

Its function is as follows. Guanine nucleotide-binding proteins (G proteins) are involved as modulators or transducers in various transmembrane signaling systems. The G(s) protein is involved in hormonal regulation of adenylate cyclase: it activates the cyclase. Participates in olfactory signal transduction. In Anopheles gambiae (African malaria mosquito), this protein is Guanine nucleotide-binding protein G(s) subunit alpha.